We begin with the raw amino-acid sequence, 24 residues long: Superoxide dismutase [Cu-Zn] (24 aa).

It belongs to the Cu-Zn superoxide dismutase family. In terms of assembly, homodimer. It depends on Cu cation as a cofactor. The cofactor is Zn(2+).

The protein localises to the cytoplasm. The enzyme catalyses 2 superoxide + 2 H(+) = H2O2 + O2. Functionally, destroys radicals which are normally produced within the cells and which are toxic to biological systems. This chain is Superoxide dismutase [Cu-Zn] (sod1), found in Aquarana catesbeiana (American bullfrog).